The sequence spans 664 residues: Pentatricopeptide repeat-containing protein At1g10910, chloroplastic (664 aa).

The N-terminal 72 residues, 1–72 (METPLLVGLE…KRHSNSYLAR (72 aa)), are a transit peptide targeting the chloroplast. PPR repeat units follow at residues 165–199 (NVYICNSILSCLVKNGKLDSCIKLFDQMKRDGLKP), 200–235 (DVVTYNTLLAGCIKVKNGYPKAIELIGELPHNGIQM), 236–270 (DSVMYGTVLAICASNGRSEEAENFIQQMKVEGHSP), 271–305 (NIYHYSSLLNSYSWKGDYKKADELMTEMKSIGLVP), 306–340 (NKVMMTTLLKVYIKGGLFDRSRELLSELESAGYAE), 341–375 (NEMPYCMLMDGLSKAGKLEEARSIFDDMKGKGVRS), 376–406 (DGYANSIMISALCRSKRFKEAKELSRDSETT), 411–445 (DLVMLNTMLCAYCRAGEMESVMRMMKKMDEQAVSP), and 446–480 (DYNTFHILIKYFIKEKLHLLAYQTTLDMHSKGHRL).

This sequence belongs to the PPR family. P subfamily.

The protein resides in the plastid. It is found in the chloroplast. The protein is Pentatricopeptide repeat-containing protein At1g10910, chloroplastic of Arabidopsis thaliana (Mouse-ear cress).